Here is a 175-residue protein sequence, read N- to C-terminus: MNFPKVGSKIQIQSYKHNGSIHRIWEETIVLKGTSKVVIGGNDRILVKESDGRHWRTREPAICYFDSEQWFNTIGMIRADGIYFYCNLGTPFTWDEEALKYIDYDLDIKVFPDMTFKLLDEDEYAMHRKMMKYPPEIDRILQRSVDELVSWIHQRKGPFAPQFVESWYERFLQYR.

The Proton donor role is filled by Arg-23. Residues Asn-87, Asp-103, Asp-105, Asp-107, Asp-120, and Glu-123 each contribute to the Mg(2+) site.

This sequence belongs to the Ntdp family. Requires Mg(2+) as cofactor.

It catalyses the reaction a ribonucleoside 5'-triphosphate + H2O = a ribonucleoside 5'-diphosphate + phosphate + H(+). The enzyme catalyses a ribonucleoside 5'-diphosphate + H2O = a ribonucleoside 5'-phosphate + phosphate + H(+). Functionally, has nucleoside phosphatase activity towards nucleoside triphosphates and nucleoside diphosphates. This Halalkalibacterium halodurans (strain ATCC BAA-125 / DSM 18197 / FERM 7344 / JCM 9153 / C-125) (Bacillus halodurans) protein is Nucleoside triphosphate/diphosphate phosphatase.